We begin with the raw amino-acid sequence, 506 residues long: Pentatricopeptide repeat-containing protein At5g18475 (506 aa).

A disordered region spans residues 28-48; the sequence is SEKKKKPSPPPESSISPVETN. PPR repeat units follow at residues 88–122, 123–158, 159–194, 195–229, 231–266, 267–301, 302–336, 337–371, 372–406, 407–441, 442–476, and 477–506; these read NNAT…TCRF, QESL…RVKP, SLNA…GLQP, NTCI…GISY, NSIT…GISP, DPVT…GCNP, NVYN…GLKL, DTVG…RCRA, DTLT…GVHL, NKGS…GIWP, HHAT…GLIP, and GPKS…SLVS.

It belongs to the PPR family. P subfamily.

The polypeptide is Pentatricopeptide repeat-containing protein At5g18475 (Arabidopsis thaliana (Mouse-ear cress)).